Reading from the N-terminus, the 483-residue chain is Glutamate mutase epsilon subunit (483 aa).

R66 serves as a coordination point for L-glutamate. Adenosylcob(III)alamin is bound at residue G68. Residue R100 participates in L-glutamate binding. Position 123 (N123) interacts with adenosylcob(III)alamin. L-glutamate is bound by residues 149-150, E171, and Y177; that span reads RH. P180 lines the adenosylcob(III)alamin pocket. Y181 provides a ligand contact to L-glutamate. Residues F297, K326, E330, and I334 each contribute to the adenosylcob(III)alamin site.

The protein belongs to the methylaspartate mutase GlmE subunit family. In terms of assembly, heterotetramer composed of 2 epsilon subunits (GlmE) and 2 sigma subunits (GlmS). GlmE exists as a homodimer and GlmS as a monomer. Adenosylcob(III)alamin is required as a cofactor.

The enzyme catalyses (2S,3S)-3-methyl-L-aspartate = L-glutamate. Its pathway is amino-acid degradation; L-glutamate degradation via mesaconate pathway; acetate and pyruvate from L-glutamate: step 1/4. With respect to regulation, competitively inhibited by (2S,4S)-4-fluoroglutamate, 2-methyleneglutarate, (2R,3RS)-3-fluoroglutamate and (S)-3-methylitaconate. In terms of biological role, catalyzes the carbon skeleton rearrangement of L-glutamate to L-threo-3-methylaspartate ((2S,3S)-3-methylaspartate). The protein is Glutamate mutase epsilon subunit of Clostridium cochlearium.